The following is a 241-amino-acid chain: Small ribosomal subunit protein uS3 (241 aa).

The KH type-2 domain occupies 22–91 (VDEYLAYKFH…NPQVTVVKVE (70 aa)). The segment at 218-241 (EMQQTQPEAPTLEETVEQSGGETQ) is disordered.

This sequence belongs to the universal ribosomal protein uS3 family. Part of the 30S ribosomal subunit.

Binds the lower part of the 30S subunit head. The protein is Small ribosomal subunit protein uS3 of Ignicoccus hospitalis (strain KIN4/I / DSM 18386 / JCM 14125).